The following is a 243-amino-acid chain: Uridylate kinase (243 aa).

ATP is bound at residue 15 to 18 (KLSG). An involved in allosteric activation by GTP region spans residues 23-28 (GSEGFG). UMP is bound at residue G57. Residues G58 and R62 each coordinate ATP. UMP-binding positions include D77 and 138-145 (TGNPFFTT). ATP-binding residues include T165, Y171, and D174.

It belongs to the UMP kinase family. In terms of assembly, homohexamer.

Its subcellular location is the cytoplasm. The enzyme catalyses UMP + ATP = UDP + ADP. It functions in the pathway pyrimidine metabolism; CTP biosynthesis via de novo pathway; UDP from UMP (UMPK route): step 1/1. Its activity is regulated as follows. Allosterically activated by GTP. Inhibited by UTP. Functionally, catalyzes the reversible phosphorylation of UMP to UDP. This chain is Uridylate kinase, found in Vibrio cholerae serotype O1 (strain ATCC 39541 / Classical Ogawa 395 / O395).